The chain runs to 67 residues: Phycobilisome 7.8 kDa linker polypeptide, allophycocyanin-associated, core (67 aa).

In terms of domain architecture, CpcD-like spans 1 to 56; the sequence is MRVFKVTACVPSQTRIRTQRELQNTYFTKLVPYDNWFREQQRIMKMGGKIVKVELA.

This sequence belongs to the phycobilisome linker protein family.

The protein resides in the cellular thylakoid membrane. Functionally, rod linker protein, associated with allophycocyanin. Linker polypeptides determine the state of aggregation and the location of the disk-shaped phycobiliprotein units within the phycobilisome and modulate their spectroscopic properties in order to mediate a directed and optimal energy transfer. This Arthrospira platensis (Spirulina platensis) protein is Phycobilisome 7.8 kDa linker polypeptide, allophycocyanin-associated, core (apcC).